A 165-amino-acid chain; its full sequence is Growth arrest and DNA damage-inducible protein GADD45 alpha (165 aa).

Threonine 2 is subject to Phosphothreonine.

Belongs to the GADD45 family. In terms of assembly, interacts with AURKA, GADD45GIP1 and PCNA. Interacts with MAPK14.

The protein resides in the nucleus. Functionally, might affect PCNA interaction with some CDK (cell division protein kinase) complexes; stimulates DNA excision repair in vitro and inhibits entry of cells into S phase. In T-cells, functions as a regulator of p38 MAPKs by inhibiting p88 phosphorylation and activity. The chain is Growth arrest and DNA damage-inducible protein GADD45 alpha (Gadd45a) from Mus musculus (Mouse).